A 343-amino-acid polypeptide reads, in one-letter code: Cysteine proteinase 1 (343 aa).

A signal peptide spans 1–18; sequence MKVILLFVLAVFTVFVSS. A propeptide spans 19–117 (activation peptide); sequence RGIPLEEQSQ…DYLDDEFINS (99 aa). Intrachain disulfides connect C139-C190, C173-C224, and C279-C332. The active site involves C142. Active-site residues include H286 and N311.

Belongs to the peptidase C1 family. Phosphoglycosylated, contains GlcNAc-alpha-1-P-Ser residues.

It localises to the lysosome. In terms of biological role, cysteine proteinases 1 and 2 are believed to participate in the breakdown of protein during differentiation of Dictyostelium as a response to starvation. This is Cysteine proteinase 1 (cprA) from Dictyostelium discoideum (Social amoeba).